A 272-amino-acid chain; its full sequence is Acidic leucine-rich nuclear phosphoprotein 32-related protein 2 (272 aa).

LRR repeat units lie at residues 57-78, 79-100, and 106-127; these read SLEE…PRLP, ALRR…AAVA, and TLRH…APLA. The LRRCT domain maps to 139–184; sequence CPVTKAKGYRDKVFALIPSLKFLDGMDAEGNDCLDSDDEEDEEEDE. A disordered region spans residues 163–272; sequence GMDAEGNDCL…DSEDDANGDN (110 aa). Residues 164–241 are compositionally biased toward acidic residues; the sequence is MDAEGNDCLD…DEAGADEEDE (78 aa). Residues 248-257 are compositionally biased toward polar residues; it reads SKGSSGSAQP.

The protein belongs to the ANP32 family.

This chain is Acidic leucine-rich nuclear phosphoprotein 32-related protein 2, found in Oryza sativa subsp. japonica (Rice).